The primary structure comprises 372 residues: N-methyl-L-tryptophan oxidase (372 aa).

FAD is bound at residue 4–34 (DLIIIGSGSVGAAAGYYATRAGLNVLMTDAH). Cys308 carries the post-translational modification S-8alpha-FAD cysteine.

The protein belongs to the MSOX/MTOX family. MTOX subfamily. In terms of assembly, monomer. FAD serves as cofactor.

The catalysed reaction is N(alpha)-methyl-L-tryptophan + O2 + H2O = L-tryptophan + formaldehyde + H2O2. Functionally, catalyzes the oxidative demethylation of N-methyl-L-tryptophan. This is N-methyl-L-tryptophan oxidase from Shigella boydii serotype 18 (strain CDC 3083-94 / BS512).